Reading from the N-terminus, the 508-residue chain is Sugar transport protein 12 (508 aa).

Topologically, residues 1 to 22 are cytoplasmic; that stretch reads MPSVGIVIGDGKKEYPGKLTLY. 12 helical membrane passes run 23-43, 80-100, 118-138, 141-161, 172-192, 201-221, 294-314, 317-337, 347-367, 383-403, 426-446, and 451-471; these read VTVT…DIGI, VSLT…SLVA, VLFC…MLIV, LLLG…LSEM, IGFQ…NFFF, LSLG…LILP, LTGI…IGFG, AALI…VVSI, FLFL…AAAI, WYAI…AWSW, ITVS…LMML, and FGLF…VYLF. The Cytoplasmic portion of the chain corresponds to 472–508; sequence LPETRGVPIEEMNRVWRSHWYWSKFVDAEKNLTKVVI.

It belongs to the major facilitator superfamily. Sugar transporter (TC 2.A.1.1) family.

The protein resides in the membrane. Its function is as follows. Mediates an active uptake of hexoses, probably by sugar/hydrogen symport. The chain is Sugar transport protein 12 (STP12) from Arabidopsis thaliana (Mouse-ear cress).